A 353-amino-acid chain; its full sequence is Rhodopsin (353 aa).

Topologically, residues Met1–Ala36 are extracellular. N-linked (GlcNAc...) asparagine glycans are attached at residues Asn2 and Asn15. Residues Tyr37 to Val61 traverse the membrane as a helical segment. Over Thr62–Asn73 the chain is Cytoplasmic. Residues Tyr74–Tyr96 traverse the membrane as a helical segment. The Extracellular segment spans residues Thr97–Cys110. An intrachain disulfide couples Cys110 to Cys187. The helical transmembrane segment at Asn111–Ile133 threads the bilayer. A 'Ionic lock' involved in activated form stabilization motif is present at residues Glu134–Trp136. Over Glu134–His152 the chain is Cytoplasmic. The helical transmembrane segment at Ala153–Val173 threads the bilayer. The Extracellular segment spans residues Gly174 to Ser202. N-linked (GlcNAc...) asparagine glycosylation occurs at Asn200. Residues Phe203–Gly224 traverse the membrane as a helical segment. At Arg225–Arg252 the chain is on the cytoplasmic side. A helical transmembrane segment spans residues Met253–Trp274. At Ile275 to Val286 the chain is on the extracellular side. The helical transmembrane segment at Phe287 to Cys308 threads the bilayer. Lys296 bears the N6-(retinylidene)lysine mark. Over Met309 to Ala353 the chain is Cytoplasmic. Residues Cys322 and Cys323 are each lipidated (S-palmitoyl cysteine). The tract at residues Glu330–Ala353 is disordered. Residues Ala334–Ala353 are compositionally biased toward low complexity.

It belongs to the G-protein coupled receptor 1 family. Opsin subfamily. Post-translationally, phosphorylated on some or all of the serine and threonine residues present in the C-terminal region. In terms of processing, contains one covalently linked retinal chromophore.

The protein localises to the membrane. It localises to the cell projection. It is found in the cilium. Its subcellular location is the photoreceptor outer segment. In terms of biological role, photoreceptor required for image-forming vision at low light intensity. While most salt water fish species use retinal as chromophore, most freshwater fish use 3-dehydroretinal, or a mixture of retinal and 3-dehydroretinal. Light-induced isomerization of 11-cis to all-trans retinal triggers a conformational change that activates signaling via G-proteins. Subsequent receptor phosphorylation mediates displacement of the bound G-protein alpha subunit by arrestin and terminates signaling. In Tetraodon nigroviridis (Spotted green pufferfish), this protein is Rhodopsin (rho).